Reading from the N-terminus, the 705-residue chain is Translation initiation factor IF-2 (705 aa).

Residues 40–124 are disordered; it reads DDQIKALDKK…QPAAPKEIPS (85 aa). Over residues 41 to 58 the composition is skewed to basic and acidic residues; the sequence is DQIKALDKKFKKEQKNDN. The span at 59-77 shows a compositional bias: low complexity; it reads KQSTQNNHQKSNNQNQNKG. Positions 94-108 are enriched in basic residues; sequence KGNKKNNRNNKKNNK. Positions 207–376 constitute a tr-type G domain; it reads ERPAVVTIMG…GLVAEVQELK (170 aa). Residues 216–223 are G1; it reads GHVDHGKT. 216–223 lines the GTP pocket; that stretch reads GHVDHGKT. The tract at residues 241–245 is G2; it reads GITQH. The G3 stretch occupies residues 262-265; that stretch reads DTPG. GTP-binding positions include 262–266 and 316–319; these read DTPGH and NKID. Residues 316 to 319 form a G4 region; that stretch reads NKID. Residues 352-354 are G5; the sequence is SAL.

This sequence belongs to the TRAFAC class translation factor GTPase superfamily. Classic translation factor GTPase family. IF-2 subfamily.

The protein localises to the cytoplasm. One of the essential components for the initiation of protein synthesis. Protects formylmethionyl-tRNA from spontaneous hydrolysis and promotes its binding to the 30S ribosomal subunits. Also involved in the hydrolysis of GTP during the formation of the 70S ribosomal complex. This is Translation initiation factor IF-2 from Staphylococcus aureus (strain MRSA252).